Here is a 363-residue protein sequence, read N- to C-terminus: S-adenosylmethionine:tRNA ribosyltransferase-isomerase (363 aa).

The protein belongs to the QueA family. Monomer.

Its subcellular location is the cytoplasm. The enzyme catalyses 7-aminomethyl-7-carbaguanosine(34) in tRNA + S-adenosyl-L-methionine = epoxyqueuosine(34) in tRNA + adenine + L-methionine + 2 H(+). It participates in tRNA modification; tRNA-queuosine biosynthesis. Functionally, transfers and isomerizes the ribose moiety from AdoMet to the 7-aminomethyl group of 7-deazaguanine (preQ1-tRNA) to give epoxyqueuosine (oQ-tRNA). This is S-adenosylmethionine:tRNA ribosyltransferase-isomerase from Pasteurella multocida (strain Pm70).